Consider the following 132-residue polypeptide: Large ribosomal subunit protein uL14 (132 aa).

This sequence belongs to the universal ribosomal protein uL14 family. As to quaternary structure, part of the 50S ribosomal subunit. Forms a cluster with proteins L3 and L24e, part of which may contact the 16S rRNA in 2 intersubunit bridges.

Binds to 23S rRNA. Forms part of two intersubunit bridges in the 70S ribosome. This is Large ribosomal subunit protein uL14 from Methanobrevibacter smithii (strain ATCC 35061 / DSM 861 / OCM 144 / PS).